The sequence spans 159 residues: MQKRAIYPGTFDPITNGHLDIVTRATQMFDHVILAIAASPGKKPMFTLDERVALAQKATAHLGNVEVVGFSDLMANFARDRQANILIRGLRAVADFEYEMQLAHMNRHLIPQLESVFLIPSKEWSFISSSLVKEVARHQGDVTHFLPDNVHQALMDKLK.

Residue Thr-10 coordinates substrate. Residues 10–11 and His-18 contribute to the ATP site; that span reads TF. Residues Lys-42, Met-74, and Arg-88 each contribute to the substrate site. ATP-binding positions include 89 to 91, Glu-99, and 124 to 130; these read GLR and WSFISSS.

Belongs to the bacterial CoaD family. As to quaternary structure, homohexamer. Mg(2+) is required as a cofactor.

Its subcellular location is the cytoplasm. The enzyme catalyses (R)-4'-phosphopantetheine + ATP + H(+) = 3'-dephospho-CoA + diphosphate. It functions in the pathway cofactor biosynthesis; coenzyme A biosynthesis; CoA from (R)-pantothenate: step 4/5. Reversibly transfers an adenylyl group from ATP to 4'-phosphopantetheine, yielding dephospho-CoA (dPCoA) and pyrophosphate. The protein is Phosphopantetheine adenylyltransferase of Salmonella choleraesuis (strain SC-B67).